Consider the following 349-residue polypeptide: Tetraacyldisaccharide 4'-kinase (349 aa).

58–65 (TAGGSGKT) is an ATP binding site.

Belongs to the LpxK family.

It catalyses the reaction a lipid A disaccharide + ATP = a lipid IVA + ADP + H(+). Its pathway is glycolipid biosynthesis; lipid IV(A) biosynthesis; lipid IV(A) from (3R)-3-hydroxytetradecanoyl-[acyl-carrier-protein] and UDP-N-acetyl-alpha-D-glucosamine: step 6/6. Functionally, transfers the gamma-phosphate of ATP to the 4'-position of a tetraacyldisaccharide 1-phosphate intermediate (termed DS-1-P) to form tetraacyldisaccharide 1,4'-bis-phosphate (lipid IVA). In Shewanella amazonensis (strain ATCC BAA-1098 / SB2B), this protein is Tetraacyldisaccharide 4'-kinase.